We begin with the raw amino-acid sequence, 268 residues long: Hydroxyethylthiazole kinase (268 aa).

Met49 provides a ligand contact to substrate. Positions 124 and 168 each coordinate ATP. Ala195 lines the substrate pocket.

This sequence belongs to the Thz kinase family. Mg(2+) is required as a cofactor.

It catalyses the reaction 5-(2-hydroxyethyl)-4-methylthiazole + ATP = 4-methyl-5-(2-phosphooxyethyl)-thiazole + ADP + H(+). Its pathway is cofactor biosynthesis; thiamine diphosphate biosynthesis; 4-methyl-5-(2-phosphoethyl)-thiazole from 5-(2-hydroxyethyl)-4-methylthiazole: step 1/1. In terms of biological role, catalyzes the phosphorylation of the hydroxyl group of 4-methyl-5-beta-hydroxyethylthiazole (THZ). This is Hydroxyethylthiazole kinase from Archaeoglobus fulgidus (strain ATCC 49558 / DSM 4304 / JCM 9628 / NBRC 100126 / VC-16).